The primary structure comprises 474 residues: UDP-N-acetylmuramate--L-alanine ligase (474 aa).

112–118 (GTHGKTT) contributes to the ATP binding site.

This sequence belongs to the MurCDEF family.

The protein resides in the cytoplasm. It catalyses the reaction UDP-N-acetyl-alpha-D-muramate + L-alanine + ATP = UDP-N-acetyl-alpha-D-muramoyl-L-alanine + ADP + phosphate + H(+). Its pathway is cell wall biogenesis; peptidoglycan biosynthesis. Cell wall formation. This Cupriavidus taiwanensis (strain DSM 17343 / BCRC 17206 / CCUG 44338 / CIP 107171 / LMG 19424 / R1) (Ralstonia taiwanensis (strain LMG 19424)) protein is UDP-N-acetylmuramate--L-alanine ligase.